A 212-amino-acid polypeptide reads, in one-letter code: LexA repressor (212 aa).

Positions 29–49 form a DNA-binding region, H-T-H motif; it reads VREIGEAVGLSSSSTIHGHIE. Residues Ser133 and Lys171 each act as for autocatalytic cleavage activity in the active site.

This sequence belongs to the peptidase S24 family. In terms of assembly, homodimer.

The catalysed reaction is Hydrolysis of Ala-|-Gly bond in repressor LexA.. Represses a number of genes involved in the response to DNA damage (SOS response), including recA and lexA. In the presence of single-stranded DNA, RecA interacts with LexA causing an autocatalytic cleavage which disrupts the DNA-binding part of LexA, leading to derepression of the SOS regulon and eventually DNA repair. This chain is LexA repressor, found in Leuconostoc mesenteroides subsp. mesenteroides (strain ATCC 8293 / DSM 20343 / BCRC 11652 / CCM 1803 / JCM 6124 / NCDO 523 / NBRC 100496 / NCIMB 8023 / NCTC 12954 / NRRL B-1118 / 37Y).